Here is a 142-residue protein sequence, read N- to C-terminus: Probable transport accessory protein MmpS5 (142 aa).

A helical transmembrane segment spans residues 7-26 (RAWIPLLILVVVAIAGFTVQ).

This sequence belongs to the MmpS family.

Its subcellular location is the cell membrane. This Mycobacterium bovis (strain ATCC BAA-935 / AF2122/97) protein is Probable transport accessory protein MmpS5 (mmpS5).